The chain runs to 291 residues: Glucose and ribitol dehydrogenase (291 aa).

The interval 1–35 (MASGGQFPPQKQESQPGKEHLMDPSPQHASPHYKP) is disordered. 45 to 69 (LVTGGDSGIGRSVCYHFALEGATVA) serves as a coordination point for NAD(+). Ser183 lines the substrate pocket. The active-site Proton acceptor is the Tyr196.

This sequence belongs to the short-chain dehydrogenases/reductases (SDR) family. As to expression, expressed in embryogenic cells, somatic embryos and seeds in the later stages of development, but not in non-embryogenic cells and mature leaves.

Its function is as follows. May act as a short alcohol-polyol-sugar dehydrogenase possibly related to carbohydrate metabolism and the acquisition of desiccation tolerance. May also be involved in signal transduction. The protein is Glucose and ribitol dehydrogenase (CAISE5) of Daucus carota (Wild carrot).